The sequence spans 685 residues: DNA ligase (685 aa).

NAD(+)-binding positions include 47-51 (DSEYD), 96-97 (SL), and Glu125. Catalysis depends on Lys127, which acts as the N6-AMP-lysine intermediate. Arg148, Glu185, Lys304, and Lys328 together coordinate NAD(+). Residues Cys422, Cys425, Cys440, and Cys446 each coordinate Zn(2+). Residues 605 to 685 (ADAQPLKGQT…ALLALFAANR (81 aa)) form the BRCT domain.

The protein belongs to the NAD-dependent DNA ligase family. LigA subfamily. Mg(2+) is required as a cofactor. Requires Mn(2+) as cofactor.

The catalysed reaction is NAD(+) + (deoxyribonucleotide)n-3'-hydroxyl + 5'-phospho-(deoxyribonucleotide)m = (deoxyribonucleotide)n+m + AMP + beta-nicotinamide D-nucleotide.. Its function is as follows. DNA ligase that catalyzes the formation of phosphodiester linkages between 5'-phosphoryl and 3'-hydroxyl groups in double-stranded DNA using NAD as a coenzyme and as the energy source for the reaction. It is essential for DNA replication and repair of damaged DNA. This chain is DNA ligase, found in Shewanella putrefaciens (strain CN-32 / ATCC BAA-453).